The primary structure comprises 250 residues: Octanoyltransferase (250 aa).

Residues 44-224 (GAGSDRLLLL…AVVQALNGDL (181 aa)) enclose the BPL/LPL catalytic domain. Residues 82–89 (RGGKITWH), 154–156 (AIG), and 167–169 (GIS) each bind substrate. Cys-185 serves as the catalytic Acyl-thioester intermediate. Residues 224–250 (LPVRDHDLPRPGTTPAAPNSTRVRSMT) form a disordered region. Residues 239–250 (AAPNSTRVRSMT) show a composition bias toward polar residues.

It belongs to the LipB family.

It localises to the cytoplasm. It carries out the reaction octanoyl-[ACP] + L-lysyl-[protein] = N(6)-octanoyl-L-lysyl-[protein] + holo-[ACP] + H(+). It participates in protein modification; protein lipoylation via endogenous pathway; protein N(6)-(lipoyl)lysine from octanoyl-[acyl-carrier-protein]: step 1/2. Its function is as follows. Catalyzes the transfer of endogenously produced octanoic acid from octanoyl-acyl-carrier-protein onto the lipoyl domains of lipoate-dependent enzymes. Lipoyl-ACP can also act as a substrate although octanoyl-ACP is likely to be the physiological substrate. The chain is Octanoyltransferase from Nocardia farcinica (strain IFM 10152).